Here is a 355-residue protein sequence, read N- to C-terminus: 3-isopropylmalate dehydrogenase (355 aa).

Substrate is bound by residues R98, R108, R132, and D223. Mg(2+)-binding residues include D223, D247, and D251. Residue 283-295 (GSAPDIAGQQKAD) coordinates NAD(+).

Belongs to the isocitrate and isopropylmalate dehydrogenases family. LeuB type 2 subfamily. As to quaternary structure, homodimer. Requires Mg(2+) as cofactor. It depends on Mn(2+) as a cofactor.

It localises to the cytoplasm. It catalyses the reaction (2R,3S)-3-isopropylmalate + NAD(+) = 4-methyl-2-oxopentanoate + CO2 + NADH. It functions in the pathway amino-acid biosynthesis; L-leucine biosynthesis; L-leucine from 3-methyl-2-oxobutanoate: step 3/4. Its function is as follows. Catalyzes the oxidation of 3-carboxy-2-hydroxy-4-methylpentanoate (3-isopropylmalate) to 3-carboxy-4-methyl-2-oxopentanoate. The product decarboxylates to 4-methyl-2 oxopentanoate. This chain is 3-isopropylmalate dehydrogenase, found in Clavibacter michiganensis subsp. michiganensis (strain NCPPB 382).